The sequence spans 259 residues: uncharacterized protein (259 aa).

Residues 1–159 (MIEQFFRPDS…TEIIIKDPYR (159 aa)) enclose the FAD-binding PCMH-type domain.

This is an uncharacterized protein from Escherichia coli O157:H7.